The primary structure comprises 184 residues: CDP-archaeol synthase (184 aa).

A run of 5 helical transmembrane segments spans residues 4 to 24 (IIMV…NPGA), 54 to 74 (FIGG…IIYI), 86 to 106 (IISA…GDIT), 122 to 142 (GSLL…FIFA), and 145 to 165 (FFLE…LTPP).

The protein belongs to the CDP-archaeol synthase family. The cofactor is Mg(2+).

It is found in the cell membrane. It catalyses the reaction 2,3-bis-O-(geranylgeranyl)-sn-glycerol 1-phosphate + CTP + H(+) = CDP-2,3-bis-O-(geranylgeranyl)-sn-glycerol + diphosphate. The protein operates within membrane lipid metabolism; glycerophospholipid metabolism. In terms of biological role, catalyzes the formation of CDP-2,3-bis-(O-geranylgeranyl)-sn-glycerol (CDP-archaeol) from 2,3-bis-(O-geranylgeranyl)-sn-glycerol 1-phosphate (DGGGP) and CTP. This reaction is the third ether-bond-formation step in the biosynthesis of archaeal membrane lipids. In Picrophilus torridus (strain ATCC 700027 / DSM 9790 / JCM 10055 / NBRC 100828 / KAW 2/3), this protein is CDP-archaeol synthase.